Consider the following 320-residue polypeptide: MPASLLELKKKIASVKQTGKITEAMRMVSASKLNQTEDRDKGYTIYNNHVRKTISRLISSQVVDSLREQDVAIDKRNIAKIDYTDVFGLGITADMIQPRKNIKSTGFLVVSGDRGLVGSYNSNVIKNMMGIFEDERAQGHDVKVLAVGSVGAQFFKKNNVNVVYEKNGVSDVPTFDEVLPIVSTAIKMFLNGVFDQLYVCYTHHVNSLSSAFRVEKMLPIVDLDIGVKEAEAHRELEYDIEPDPNRVLMKLLPQYARSTIYGAILDAKTAEHASSMTAMQSATDNAKDLVSNLTTKLNRARQAQITTEITEIISGANALE.

Belongs to the ATPase gamma chain family. F-type ATPases have 2 components, CF(1) - the catalytic core - and CF(0) - the membrane proton channel. CF(1) has five subunits: alpha(3), beta(3), gamma(1), delta(1), epsilon(1). CF(0) has three main subunits: a, b and c.

The protein resides in the cell membrane. In terms of biological role, produces ATP from ADP in the presence of a proton gradient across the membrane. The gamma chain is believed to be important in regulating ATPase activity and the flow of protons through the CF(0) complex. The polypeptide is ATP synthase gamma chain (Lactobacillus helveticus (strain DPC 4571)).